Reading from the N-terminus, the 287-residue chain is Ribonuclease Z (287 aa).

Zn(2+) is bound by residues His-64, His-66, Asp-68, His-69, His-124, Asp-191, and His-250. Catalysis depends on Asp-68, which acts as the Proton acceptor.

Belongs to the RNase Z family. Homodimer. It depends on Zn(2+) as a cofactor.

It catalyses the reaction Endonucleolytic cleavage of RNA, removing extra 3' nucleotides from tRNA precursor, generating 3' termini of tRNAs. A 3'-hydroxy group is left at the tRNA terminus and a 5'-phosphoryl group is left at the trailer molecule.. Zinc phosphodiesterase, which displays some tRNA 3'-processing endonuclease activity. Probably involved in tRNA maturation, by removing a 3'-trailer from precursor tRNA. In Pyrobaculum aerophilum (strain ATCC 51768 / DSM 7523 / JCM 9630 / CIP 104966 / NBRC 100827 / IM2), this protein is Ribonuclease Z.